Here is a 130-residue protein sequence, read N- to C-terminus: Small ribosomal subunit protein uS8 (130 aa).

This sequence belongs to the universal ribosomal protein uS8 family. Part of the 30S ribosomal subunit. Contacts proteins S5 and S12.

Its function is as follows. One of the primary rRNA binding proteins, it binds directly to 16S rRNA central domain where it helps coordinate assembly of the platform of the 30S subunit. In Aliivibrio fischeri (strain ATCC 700601 / ES114) (Vibrio fischeri), this protein is Small ribosomal subunit protein uS8.